Here is a 202-residue protein sequence, read N- to C-terminus: Tetranectin (202 aa).

The signal sequence occupies residues 1–21 (MELWGPCVLLCLFSLLTQVTA). Intrachain disulfides connect C71/C81, C98/C197, and C173/C189. Residues 77–198 (VHMKCFLAFV…CRDKLPYVCQ (122 aa)) enclose the C-type lectin domain.

In terms of assembly, homotrimer.

It localises to the secreted. In terms of biological role, tetranectin binds to plasminogen and to isolated kringle 4. May be involved in the packaging of molecules destined for exocytosis. Plays a role in retinal function. In Bos taurus (Bovine), this protein is Tetranectin (CLEC3B).